The sequence spans 311 residues: Aspartate carbamoyltransferase catalytic subunit (311 aa).

Carbamoyl phosphate contacts are provided by R55 and T56. K85 is an L-aspartate binding site. R106, H135, and Q138 together coordinate carbamoyl phosphate. Residues R168 and R230 each contribute to the L-aspartate site. Carbamoyl phosphate is bound by residues L268 and P269.

Belongs to the aspartate/ornithine carbamoyltransferase superfamily. ATCase family. In terms of assembly, heterododecamer (2C3:3R2) of six catalytic PyrB chains organized as two trimers (C3), and six regulatory PyrI chains organized as three dimers (R2).

The enzyme catalyses carbamoyl phosphate + L-aspartate = N-carbamoyl-L-aspartate + phosphate + H(+). It participates in pyrimidine metabolism; UMP biosynthesis via de novo pathway; (S)-dihydroorotate from bicarbonate: step 2/3. Catalyzes the condensation of carbamoyl phosphate and aspartate to form carbamoyl aspartate and inorganic phosphate, the committed step in the de novo pyrimidine nucleotide biosynthesis pathway. The chain is Aspartate carbamoyltransferase catalytic subunit from Yersinia enterocolitica serotype O:8 / biotype 1B (strain NCTC 13174 / 8081).